The following is a 427-amino-acid chain: Diaminobutyrate--2-oxoglutarate transaminase (427 aa).

An N6-(pyridoxal phosphate)lysine modification is found at Lys269.

This sequence belongs to the class-III pyridoxal-phosphate-dependent aminotransferase family. Requires pyridoxal 5'-phosphate as cofactor.

The catalysed reaction is L-2,4-diaminobutanoate + 2-oxoglutarate = L-aspartate 4-semialdehyde + L-glutamate. The protein operates within amine and polyamine biosynthesis; ectoine biosynthesis; L-ectoine from L-aspartate 4-semialdehyde: step 1/3. Functionally, catalyzes reversively the conversion of L-aspartate beta-semialdehyde (ASA) to L-2,4-diaminobutyrate (DABA) by transamination with L-glutamate. The chain is Diaminobutyrate--2-oxoglutarate transaminase (ectB) from Halalkalibacterium halodurans (strain ATCC BAA-125 / DSM 18197 / FERM 7344 / JCM 9153 / C-125) (Bacillus halodurans).